Here is a 73-residue protein sequence, read N- to C-terminus: Toxin Td7 (73 aa).

Positions 1 to 7 (IGMAVEC) are cleaved as a signal peptide. Positions 8-70 (KDGYLVGADG…VWDSATNRCG (63 aa)) constitute an LCN-type CS-alpha/beta domain. Intrachain disulfides connect Cys-18–Cys-69, Cys-22–Cys-44, Cys-30–Cys-50, and Cys-34–Cys-52. A Lysine amide modification is found at Lys-71.

It belongs to the long (4 C-C) scorpion toxin superfamily. Sodium channel inhibitor family. Beta subfamily. As to expression, expressed by the venom gland.

The protein resides in the secreted. In terms of biological role, beta toxins bind voltage-independently at site-4 of sodium channels (Nav) and shift the voltage of activation toward more negative potentials thereby affecting sodium channel activation and promoting spontaneous and repetitive firing. The polypeptide is Toxin Td7 (Tityus discrepans (Venezuelan scorpion)).